The primary structure comprises 493 residues: Amphoterin-induced protein 1 (493 aa).

Positions 1 to 27 (MHPHRDPRGLWLLLPSLSLLLFEVARA) are cleaved as a signal peptide. An LRRNT domain is found at 28 to 61 (GRAVVSCPAACLCASNILSCSKQQLPNVPHSLPS). Residues 28–372 (GRAVVSCPAA…LHGHHDTLNT (345 aa)) are Extracellular-facing. Cystine bridges form between Cys-34/Cys-40 and Cys-38/Cys-47. LRR repeat units follow at residues 62–83 (YTAL…WTPT), 87–108 (QLHS…AFSP), 111–132 (NLRY…LFSD), 135–156 (VLEV…AFDD), 159–179 (QLQK…ELVK), and 186–206 (KLTL…PDLQ). Asn-72 carries an N-linked (GlcNAc...) asparagine glycan. In terms of domain architecture, LRRCT spans 221-272 (NPLNCDCELYQLFSHWQYRQLSSVMDFQEDLYCMNSKKLHNVFNLSFLNCGE). Intrachain disulfides connect Cys-225–Cys-253, Cys-227–Cys-270, and Cys-290–Cys-341. 4 N-linked (GlcNAc...) asparagine glycosylation sites follow: Asn-264, Asn-315, Asn-349, and Asn-360. Residues 269-353 (NCGEYKERAW…MGETFNETLS (85 aa)) enclose the Ig-like C2-type domain. The chain crosses the membrane as a helical span at residues 373–393 (AYTTLVGCILSVVLVLIYLYL). The Cytoplasmic portion of the chain corresponds to 394-493 (TPCRCWCRGV…SVFSDTPIVV (100 aa)). A disordered region spans residues 405–493 (KPSSHQGDSL…SVFSDTPIVV (89 aa)). The span at 408 to 424 (SHQGDSLSSSMLSTTPN) shows a compositional bias: polar residues. Residues 431–442 (GDKDDGFDRRVA) are compositionally biased toward basic and acidic residues. Phosphoserine occurs at positions 477 and 481.

It belongs to the immunoglobulin superfamily. AMIGO family. Homodimer, and heterodimer with AMIGO2 and AMIGO3. Interacts with KCNB1.

The protein resides in the cell membrane. It is found in the perikaryon. Its subcellular location is the cell projection. It localises to the dendrite. The protein localises to the axon. Functionally, promotes growth and fasciculation of neurites from cultured hippocampal neurons. May be involved in fasciculation as well as myelination of developing neural axons. May have a role in regeneration as well as neural plasticity in the adult nervous system. May mediate homophilic as well as heterophilic cell-cell interaction and contribute to signal transduction through its intracellular domain. Assembled with KCNB1 modulates the gating characteristics of the delayed rectifier voltage-dependent potassium channel KCNB1. The sequence is that of Amphoterin-induced protein 1 from Homo sapiens (Human).